Reading from the N-terminus, the 381-residue chain is Arogenate dehydratase/prephenate dehydratase 2, chloroplastic (381 aa).

The tract at residues 1 to 32 is disordered; it reads MAMHTVRLSPATQLHGGISSNLSPPNRKPNNS. Residues 1–66 constitute a chloroplast transit peptide; it reads MAMHTVRLSP…DANGRDNSVR (66 aa). The span at 18–32 shows a compositional bias: polar residues; the sequence is ISSNLSPPNRKPNNS. A Prephenate dehydratase domain is found at 100 to 275; it reads RVAYQGVRGA…NVTRFLMLAR (176 aa). An ACT domain is found at 289–375; that stretch reads SIVFSLEEGP…TFLRVLGSYP (87 aa).

In terms of tissue distribution, expressed in roots, leaves, stems, flowers and siliques. Most abundant in leaves and seeds.

The protein localises to the plastid. The protein resides in the chloroplast stroma. The catalysed reaction is L-arogenate + H(+) = L-phenylalanine + CO2 + H2O. The enzyme catalyses prephenate + H(+) = 3-phenylpyruvate + CO2 + H2O. It participates in amino-acid biosynthesis; L-phenylalanine biosynthesis; L-phenylalanine from L-arogenate: step 1/1. The protein operates within amino-acid biosynthesis; L-phenylalanine biosynthesis; phenylpyruvate from prephenate: step 1/1. Its function is as follows. Converts the prephenate produced from the shikimate-chorismate pathway into phenylalanine. Dehydratase that uses arogenate and prephenate as substrates. Utilzes more efficiently arogenate than prephenate. Required for chloroplast division prior to ARC5, but in an ARC3- and ARC6-dependent manner, especially involved in the Z-ring formation. This is Arogenate dehydratase/prephenate dehydratase 2, chloroplastic from Arabidopsis thaliana (Mouse-ear cress).